A 921-amino-acid polypeptide reads, in one-letter code: Isoleucine--tRNA ligase (921 aa).

Residues 57 to 67 (PYANGDIHMGH) carry the 'HIGH' region motif. L-isoleucyl-5'-AMP is bound at residue glutamate 552. Residues 593–597 (KMSKS) carry the 'KMSKS' region motif. Lysine 596 contributes to the ATP binding site. The Zn(2+) site is built by cysteine 887, cysteine 890, cysteine 907, and cysteine 910.

The protein belongs to the class-I aminoacyl-tRNA synthetase family. IleS type 1 subfamily. In terms of assembly, monomer. Zn(2+) serves as cofactor.

It is found in the cytoplasm. The enzyme catalyses tRNA(Ile) + L-isoleucine + ATP = L-isoleucyl-tRNA(Ile) + AMP + diphosphate. Functionally, catalyzes the attachment of isoleucine to tRNA(Ile). As IleRS can inadvertently accommodate and process structurally similar amino acids such as valine, to avoid such errors it has two additional distinct tRNA(Ile)-dependent editing activities. One activity is designated as 'pretransfer' editing and involves the hydrolysis of activated Val-AMP. The other activity is designated 'posttransfer' editing and involves deacylation of mischarged Val-tRNA(Ile). In Halalkalibacterium halodurans (strain ATCC BAA-125 / DSM 18197 / FERM 7344 / JCM 9153 / C-125) (Bacillus halodurans), this protein is Isoleucine--tRNA ligase.